The sequence spans 554 residues: CTP synthase (554 aa).

Residues 1 to 279 (MSQPRAEHVT…DAFLIRRLDL (279 aa)) form an amidoligase domain region. Residue S21 participates in CTP binding. S21 serves as a coordination point for UTP. ATP contacts are provided by residues 22-27 (SLGKGL) and D79. Residues D79 and E153 each coordinate Mg(2+). Residues 160-162 (DIE), 200-205 (KTKPTQ), and K236 contribute to the CTP site. Residues 200 to 205 (KTKPTQ) and K236 contribute to the UTP site. Positions 304 to 551 (TVALVGKYID…VKAGLKHKND (248 aa)) constitute a Glutamine amidotransferase type-1 domain. L-glutamine is bound at residue G367. Residue C394 is the Nucleophile; for glutamine hydrolysis of the active site. Residues 395–398 (LGLQ), E417, and R478 contribute to the L-glutamine site. Catalysis depends on residues H524 and E526.

This sequence belongs to the CTP synthase family. Homotetramer.

It carries out the reaction UTP + L-glutamine + ATP + H2O = CTP + L-glutamate + ADP + phosphate + 2 H(+). The catalysed reaction is L-glutamine + H2O = L-glutamate + NH4(+). It catalyses the reaction UTP + NH4(+) + ATP = CTP + ADP + phosphate + 2 H(+). It participates in pyrimidine metabolism; CTP biosynthesis via de novo pathway; CTP from UDP: step 2/2. Its activity is regulated as follows. Allosterically activated by GTP, when glutamine is the substrate; GTP has no effect on the reaction when ammonia is the substrate. The allosteric effector GTP functions by stabilizing the protein conformation that binds the tetrahedral intermediate(s) formed during glutamine hydrolysis. Inhibited by the product CTP, via allosteric rather than competitive inhibition. Its function is as follows. Catalyzes the ATP-dependent amination of UTP to CTP with either L-glutamine or ammonia as the source of nitrogen. Regulates intracellular CTP levels through interactions with the four ribonucleotide triphosphates. The chain is CTP synthase from Corynebacterium kroppenstedtii (strain DSM 44385 / JCM 11950 / CIP 105744 / CCUG 35717).